A 99-amino-acid chain; its full sequence is Large ribosomal subunit protein bL27 (99 aa).

The propeptide occupies M1 to F10.

This sequence belongs to the bacterial ribosomal protein bL27 family. The N-terminus is cleaved by ribosomal processing cysteine protease Prp.

The sequence is that of Large ribosomal subunit protein bL27 from Caldicellulosiruptor bescii (strain ATCC BAA-1888 / DSM 6725 / KCTC 15123 / Z-1320) (Anaerocellum thermophilum).